A 365-amino-acid polypeptide reads, in one-letter code: Glutamate 5-kinase 1 (365 aa).

K9 lines the ATP pocket. Substrate is bound by residues S49, D136, and N148. ATP-binding positions include 168–169 (TD) and 210–216 (TGGMKSK). The PUA domain maps to 276–353 (SGKITVDEGA…DEFHHEEGIE (78 aa)).

This sequence belongs to the glutamate 5-kinase family.

The protein localises to the cytoplasm. It carries out the reaction L-glutamate + ATP = L-glutamyl 5-phosphate + ADP. Its pathway is amino-acid biosynthesis; L-proline biosynthesis; L-glutamate 5-semialdehyde from L-glutamate: step 1/2. Catalyzes the transfer of a phosphate group to glutamate to form L-glutamate 5-phosphate. This is Glutamate 5-kinase 1 from Bacillus licheniformis (strain ATCC 14580 / DSM 13 / JCM 2505 / CCUG 7422 / NBRC 12200 / NCIMB 9375 / NCTC 10341 / NRRL NRS-1264 / Gibson 46).